Consider the following 141-residue polypeptide: Putative nickel-responsive regulator (141 aa).

Ni(2+)-binding residues include His80, His91, His93, and Cys99.

This sequence belongs to the transcriptional regulatory CopG/NikR family. Homotetramer. Ni(2+) is required as a cofactor.

Functionally, transcriptional regulator. The sequence is that of Putative nickel-responsive regulator from Methanocaldococcus jannaschii (strain ATCC 43067 / DSM 2661 / JAL-1 / JCM 10045 / NBRC 100440) (Methanococcus jannaschii).